Consider the following 176-residue polypeptide: ATP-dependent protease subunit HslV (176 aa).

T2 is an active-site residue. G157, C160, and T163 together coordinate Na(+).

This sequence belongs to the peptidase T1B family. HslV subfamily. A double ring-shaped homohexamer of HslV is capped on each side by a ring-shaped HslU homohexamer. The assembly of the HslU/HslV complex is dependent on binding of ATP.

It is found in the cytoplasm. The enzyme catalyses ATP-dependent cleavage of peptide bonds with broad specificity.. Its activity is regulated as follows. Allosterically activated by HslU binding. In terms of biological role, protease subunit of a proteasome-like degradation complex believed to be a general protein degrading machinery. This Klebsiella pneumoniae (strain 342) protein is ATP-dependent protease subunit HslV.